Reading from the N-terminus, the 193-residue chain is Major structural subunit of bundle-forming pilus (193 aa).

Residues 1-13 (MVSKIMNKKYEKG) constitute a propeptide that is removed on maturation. L14 carries the N-methylleucine modification. A helical membrane pass occupies residues 14 to 35 (LSLIESAMVLALAATVTAGVMF). C129 and C179 are disulfide-bonded.

The protein belongs to the N-Me-Phe pilin family. In terms of assembly, 10 to 100 laterally aligned filaments or bundle-forming pili coalesce into rope-like bundles. These form linkages between the bacteria within the enteropathogenic E.coli (EPEC) microcolonies that are attached to epithelial cells.

The protein resides in the fimbrium. It is found in the membrane. Its function is as follows. Major repeating bundle-forming pilus (BFP) subunit. Is required for EPEC localized adherence. This chain is Major structural subunit of bundle-forming pilus (bfpA), found in Escherichia coli O111:H-.